An 860-amino-acid polypeptide reads, in one-letter code: LPS-assembly protein LptD (860 aa).

Residues 1 to 21 form the signal peptide; the sequence is MTKRYFSLLAVCSAIATSTFA.

It belongs to the LptD family. As to quaternary structure, component of the lipopolysaccharide transport and assembly complex. Interacts with LptE and LptA.

The protein resides in the cell outer membrane. In terms of biological role, together with LptE, is involved in the assembly of lipopolysaccharide (LPS) at the surface of the outer membrane. The chain is LPS-assembly protein LptD from Saccharophagus degradans (strain 2-40 / ATCC 43961 / DSM 17024).